The chain runs to 90 residues: ATP synthase subunit c (90 aa).

2 consecutive transmembrane segments (helical) span residues 4-24 (FVYS…GCGI) and 53-73 (IGLA…LILI).

This sequence belongs to the ATPase C chain family. In terms of assembly, F-type ATPases have 2 components, F(1) - the catalytic core - and F(0) - the membrane proton channel. F(1) has five subunits: alpha(3), beta(3), gamma(1), delta(1), epsilon(1). F(0) has three main subunits: a(1), b(2) and c(10-14). The alpha and beta chains form an alternating ring which encloses part of the gamma chain. F(1) is attached to F(0) by a central stalk formed by the gamma and epsilon chains, while a peripheral stalk is formed by the delta and b chains.

It localises to the cell inner membrane. Functionally, f(1)F(0) ATP synthase produces ATP from ADP in the presence of a proton or sodium gradient. F-type ATPases consist of two structural domains, F(1) containing the extramembraneous catalytic core and F(0) containing the membrane proton channel, linked together by a central stalk and a peripheral stalk. During catalysis, ATP synthesis in the catalytic domain of F(1) is coupled via a rotary mechanism of the central stalk subunits to proton translocation. In terms of biological role, key component of the F(0) channel; it plays a direct role in translocation across the membrane. A homomeric c-ring of between 10-14 subunits forms the central stalk rotor element with the F(1) delta and epsilon subunits. The chain is ATP synthase subunit c from Syntrophobacter fumaroxidans (strain DSM 10017 / MPOB).